The chain runs to 691 residues: Elongation factor G (691 aa).

One can recognise a tr-type G domain in the interval 8 to 282 (ERVRNIGIAA…AVVDYLPAPV (275 aa)). Residues 17–24 (AHIDAGKT), 81–85 (DTPGH), and 135–138 (NKMD) each bind GTP.

This sequence belongs to the TRAFAC class translation factor GTPase superfamily. Classic translation factor GTPase family. EF-G/EF-2 subfamily.

It is found in the cytoplasm. Its function is as follows. Catalyzes the GTP-dependent ribosomal translocation step during translation elongation. During this step, the ribosome changes from the pre-translocational (PRE) to the post-translocational (POST) state as the newly formed A-site-bound peptidyl-tRNA and P-site-bound deacylated tRNA move to the P and E sites, respectively. Catalyzes the coordinated movement of the two tRNA molecules, the mRNA and conformational changes in the ribosome. This chain is Elongation factor G, found in Prochlorococcus marinus (strain MIT 9303).